Consider the following 146-residue polypeptide: Aspartate carbamoyltransferase regulatory chain (146 aa).

Residues cysteine 102, cysteine 107, cysteine 131, and cysteine 134 each contribute to the Zn(2+) site.

This sequence belongs to the PyrI family. Contains catalytic and regulatory chains. Zn(2+) serves as cofactor.

Functionally, involved in allosteric regulation of aspartate carbamoyltransferase. This chain is Aspartate carbamoyltransferase regulatory chain, found in Clostridium acetobutylicum (strain ATCC 824 / DSM 792 / JCM 1419 / IAM 19013 / LMG 5710 / NBRC 13948 / NRRL B-527 / VKM B-1787 / 2291 / W).